Consider the following 284-residue polypeptide: 2,3,4,5-tetrahydropyridine-2,6-dicarboxylate N-succinyltransferase (284 aa).

This sequence belongs to the transferase hexapeptide repeat family.

Its subcellular location is the cytoplasm. It carries out the reaction (S)-2,3,4,5-tetrahydrodipicolinate + succinyl-CoA + H2O = (S)-2-succinylamino-6-oxoheptanedioate + CoA. It functions in the pathway amino-acid biosynthesis; L-lysine biosynthesis via DAP pathway; LL-2,6-diaminopimelate from (S)-tetrahydrodipicolinate (succinylase route): step 1/3. This is 2,3,4,5-tetrahydropyridine-2,6-dicarboxylate N-succinyltransferase from Brucella abortus (strain S19).